We begin with the raw amino-acid sequence, 344 residues long: 5,10-methenyltetrahydromethanopterin hydrogenase (344 aa).

Belongs to the HMD family. Homotetramer.

It catalyses the reaction 5,10-methenyl-5,6,7,8-tetrahydromethanopterin + H2 = 5,10-methylenetetrahydromethanopterin + H(+). It participates in one-carbon metabolism; methanogenesis from CO(2); 5,10-methylene-5,6,7,8-tetrahydromethanopterin from 5,10-methenyl-5,6,7,8-tetrahydromethanopterin (hydrogen route): step 1/1. Activity requires salt; 100 mM sodium or potassium salts of chloride, phosphate or sulfate are equally effective. Inactivated by O(2). Catalyzes the reversible reduction of methenyl-H(4)MPT(+) to methylene-H(4)MPT. The polypeptide is 5,10-methenyltetrahydromethanopterin hydrogenase (Methanothermobacter marburgensis (strain ATCC BAA-927 / DSM 2133 / JCM 14651 / NBRC 100331 / OCM 82 / Marburg) (Methanobacterium thermoautotrophicum)).